The chain runs to 171 residues: Protein phosphatase 1 regulatory subunit 1A (171 aa).

Position 1 is an N-acetylmethionine (Met1). The segment at 9–12 (KIQF) is essential for activity. Residues 17 to 171 (LEPHLDPEAA…PLDSQGASLV (155 aa)) form a disordered region. Residues 19–29 (PHLDPEAAEQI) are compositionally biased toward basic and acidic residues. Residue Thr35 is modified to Phosphothreonine; by PKA. The essential for activity stretch occupies residues 42–54 (TSDQSSPEVDEDR). Phosphoserine is present on residues Ser43, Ser46, Ser47, and Ser67. Positions 122–133 (GSASRPDTSGTA) are enriched in polar residues. The segment covering 137–148 (AESKPKTQEQRG) has biased composition (basic and acidic residues). Residues 143–171 (TQEQRGVEPSTEDLSAHMLPLDSQGASLV) form an interaction with PPP1R15A region.

Belongs to the protein phosphatase inhibitor 1 family. As to quaternary structure, interacts with PPP1R15A. Phosphorylation of Thr-35 is required for activity.

Functionally, inhibitor of protein-phosphatase 1. This protein may be important in hormonal control of glycogen metabolism. Hormones that elevate intracellular cAMP increase I-1 activity in many tissues. I-1 activation may impose cAMP control over proteins that are not directly phosphorylated by PKA. Following a rise in intracellular calcium, I-1 is inactivated by calcineurin (or PP2B). Does not inhibit type-2 phosphatases. This is Protein phosphatase 1 regulatory subunit 1A (Ppp1r1a) from Rattus norvegicus (Rat).